Here is a 318-residue protein sequence, read N- to C-terminus: V-set and immunoglobulin domain-containing protein 1 (318 aa).

An N-terminal signal peptide occupies residues 1–19 (MSFLLFITLGLSLTALSHC). An Ig-like V-type domain is found at 20–131 (VQVTIQNPII…SSGQGKILLT (112 aa)). The Extracellular portion of the chain corresponds to 20–233 (VQVTIQNPII…TGGEGGVIAA (214 aa)). 2 disulfides stabilise this stretch: Cys41/Cys114 and Cys157/Cys207. The Ig-like C2-type domain occupies 136-223 (PSVPHCSIRG…GNATCELNLH (88 aa)). Residues 234-254 (AVIGGLLAAAIIIAIVWFLVV) form a helical membrane-spanning segment. The Cytoplasmic segment spans residues 255 to 318 (KRKQKKQLPP…ANGETEEPTA (64 aa)). The interval 261-318 (QLPPTKEMKTGGNQYMAVSGEANEPPKENLGASEPTETIQFHDHAENAANGETEEPTA) is disordered.

Expressed in thymocytes.

The protein localises to the membrane. The chain is V-set and immunoglobulin domain-containing protein 1 (vsig1) from Xenopus laevis (African clawed frog).